The primary structure comprises 598 residues: Urease subunit alpha (598 aa).

The Urease domain maps to 136–598 (GGLDTHVHWL…APLAQRYFLF (463 aa)). The Ni(2+) site is built by His141, His143, and Lys223. Lys223 bears the N6-carboxylysine mark. His225 is a substrate binding site. Positions 252 and 278 each coordinate Ni(2+). The active-site Proton donor is His326. Asp366 contacts Ni(2+).

This sequence belongs to the metallo-dependent hydrolases superfamily. Urease alpha subunit family. Heterotrimer of UreA (gamma), UreB (beta) and UreC (alpha) subunits. Three heterotrimers associate to form the active enzyme. The cofactor is Ni cation. Carboxylation allows a single lysine to coordinate two nickel ions.

Its subcellular location is the cytoplasm. The catalysed reaction is urea + 2 H2O + H(+) = hydrogencarbonate + 2 NH4(+). The protein operates within nitrogen metabolism; urea degradation; CO(2) and NH(3) from urea (urease route): step 1/1. The chain is Urease subunit alpha from Ureaplasma urealyticum serovar 10 (strain ATCC 33699 / Western).